Here is a 573-residue protein sequence, read N- to C-terminus: 60 kDa lysophospholipase (573 aa).

One can recognise an Asparaginase/glutaminase domain in the interval Arg9–Asp355. Thr19 functions as the Acyl-ester intermediate in the catalytic mechanism. The asparaginase stretch occupies residues Thr41 to Glu350. Residues Asp84–Ser86 and Thr116–Asp117 contribute to the substrate site. ANK repeat units lie at residues Gly141–Pro170, Ala399–Leu429, Asn433–Thr462, Asp466–Thr495, and Asp533–Ala562.

This sequence in the N-terminal section; belongs to the asparaginase 1 family. As to quaternary structure, monomer.

It catalyses the reaction a 1-acyl-sn-glycero-3-phosphocholine + H2O = sn-glycerol 3-phosphocholine + a fatty acid + H(+). The catalysed reaction is L-asparagine + H2O = L-aspartate + NH4(+). The enzyme catalyses a 1-O-alkyl-2-acetyl-sn-glycero-3-phosphocholine + H2O = a 1-O-alkyl-sn-glycero-3-phosphocholine + acetate + H(+). It carries out the reaction 1-hexadecanoyl-sn-glycero-3-phosphocholine + H2O = sn-glycerol 3-phosphocholine + hexadecanoate + H(+). It catalyses the reaction 2 1-hexadecanoyl-sn-glycero-3-phosphocholine = 1,2-dihexadecanoyl-sn-glycero-3-phosphocholine + sn-glycerol 3-phosphocholine. The catalysed reaction is 1-octadecanoyl-sn-glycero-3-phosphocholine + H2O = octadecanoate + sn-glycerol 3-phosphocholine + H(+). The enzyme catalyses 1-(9Z-octadecenoyl)-sn-glycero-3-phosphocholine + H2O = sn-glycerol 3-phosphocholine + (9Z)-octadecenoate + H(+). It carries out the reaction 1-hexadecanoyl-sn-glycero-3-phosphoethanolamine + H2O = sn-glycero-3-phosphoethanolamine + hexadecanoate + H(+). It catalyses the reaction 1-(9Z-octadecenoyl)-sn-glycero-3-phosphoethanolamine + H2O = sn-glycero-3-phosphoethanolamine + (9Z)-octadecenoate + H(+). The catalysed reaction is 1-hexadecanoyl-sn-glycero-3-phosphoethanolamine + 1-hexadecanoyl-sn-glycero-3-phosphocholine = 1,2-dihexadecanoyl-sn-glycero-3-phosphoethanolamine + sn-glycerol 3-phosphocholine. The enzyme catalyses 2-(5Z,8Z,11Z,14Z)-eicosatetraenoyl-sn-glycero-3-phosphocholine + H2O = sn-glycerol 3-phosphocholine + (5Z,8Z,11Z,14Z)-eicosatetraenoate + H(+). It carries out the reaction 2-hexadecanoyl-sn-glycero-3-phosphocholine + H2O = sn-glycerol 3-phosphocholine + hexadecanoate + H(+). It catalyses the reaction 2 2-hexadecanoyl-sn-glycero-3-phosphocholine = 1,2-dihexadecanoyl-sn-glycero-3-phosphocholine + sn-glycerol 3-phosphocholine. The catalysed reaction is 1-O-(9Z)-octadecenoyl-2-O-acetyl-sn-glycero-3-phosphocholine + H2O = 2-acetyl-sn-glycero-3-phosphocholine + (9Z)-octadecenoate + H(+). The enzyme catalyses a 1-acyl-sn-glycero-3-phospho-(1D-myo-inositol) + 1-hexadecanoyl-sn-glycero-3-phosphocholine = a 1-acyl-2-hexadecanoyl-sn-glycero-3-phospho-(1D-myo-inositol) + sn-glycerol 3-phosphocholine. It carries out the reaction 2 2-(5Z,8Z,11Z,14Z)-eicosatetraenoyl-sn-glycero-3-phosphocholine = 1,2-di-(5Z,8Z,11Z,14Z-eicosatetraenoyl)-sn-glycero-3-phosphocholine + sn-glycerol 3-phosphocholine. In terms of biological role, exhibits lysophospholipase, transacylase, PAF acetylhydrolase and asparaginase activities. Can catalyze three types of transacylation reactions: (1) acyl transfer from 1-acyl-sn-glycero-3-phosphocholine (1-acyl-GPC) to the sn-1(3) positions of glycerol and 2-acylglycerol (sn-1 to -1(3) transfer), (2) acyl transfer from 1-acyl-GPC to the sn-2 positions of 1-acyl-GPC, 1-acyl-sn-glycero-3-phosphoethanolamine (1-acyl-GPE), and other lysophospholipids (sn-1 to -2 transfer) and (3) acyl transfer from 2-acyl-GPC to the sn-1 position of 2-acyl-GPC and 2-acyl-GPE (sn-2 to -1 transfer). Mediates the synthesis of 1-arachidonoyl species of phospholipids by transferring the arachidonoyl residue from 2-arachidonoyl lysophospholipid to the sn-1 position of 2-acyl lysophospholipid. In Homo sapiens (Human), this protein is 60 kDa lysophospholipase (ASPG).